Consider the following 112-residue polypeptide: Large ribosomal subunit protein P1 (112 aa).

The span at 71–90 (PAQAAAAAPAGGAPAAAAPA) shows a compositional bias: low complexity. The interval 71–112 (PAQAAAAAPAGGAPAAAAPAESKEGRRSQGESDDDMGFGLLD) is disordered. The segment covering 91–100 (ESKEGRRSQG) has biased composition (basic and acidic residues).

It belongs to the eukaryotic ribosomal protein P1/P2 family. In terms of assembly, P1 and P2 exist as dimers at the large ribosomal subunit.

Its function is as follows. Plays an important role in the elongation step of protein synthesis. The sequence is that of Large ribosomal subunit protein P1 (rpl-21) from Oscheius tipulae.